Consider the following 186-residue polypeptide: ATP synthase subunit b' (186 aa).

A helical membrane pass occupies residues 39–59 (IFWLLLALGAIYWLLKNIAIP).

Belongs to the ATPase B chain family. In terms of assembly, F-type ATPases have 2 components, F(1) - the catalytic core - and F(0) - the membrane proton channel. F(1) has five subunits: alpha(3), beta(3), gamma(1), delta(1), epsilon(1). F(0) has four main subunits: a(1), b(1), b'(1) and c(10-14). The alpha and beta chains form an alternating ring which encloses part of the gamma chain. F(1) is attached to F(0) by a central stalk formed by the gamma and epsilon chains, while a peripheral stalk is formed by the delta, b and b' chains.

The protein resides in the cellular chromatophore membrane. F(1)F(0) ATP synthase produces ATP from ADP in the presence of a proton or sodium gradient. F-type ATPases consist of two structural domains, F(1) containing the extramembraneous catalytic core and F(0) containing the membrane proton channel, linked together by a central stalk and a peripheral stalk. During catalysis, ATP synthesis in the catalytic domain of F(1) is coupled via a rotary mechanism of the central stalk subunits to proton translocation. In terms of biological role, component of the F(0) channel, it forms part of the peripheral stalk, linking F(1) to F(0). The b'-subunit is a diverged and duplicated form of b found in plants and photosynthetic bacteria. The chain is ATP synthase subunit b' from Rhodobacter capsulatus (Rhodopseudomonas capsulata).